Here is a 400-residue protein sequence, read N- to C-terminus: Tryptophan synthase beta chain (400 aa).

At Lys92 the chain carries N6-(pyridoxal phosphate)lysine.

The protein belongs to the TrpB family. Tetramer of two alpha and two beta chains. Requires pyridoxal 5'-phosphate as cofactor.

It carries out the reaction (1S,2R)-1-C-(indol-3-yl)glycerol 3-phosphate + L-serine = D-glyceraldehyde 3-phosphate + L-tryptophan + H2O. Its pathway is amino-acid biosynthesis; L-tryptophan biosynthesis; L-tryptophan from chorismate: step 5/5. Functionally, the beta subunit is responsible for the synthesis of L-tryptophan from indole and L-serine. In Neisseria meningitidis serogroup C (strain 053442), this protein is Tryptophan synthase beta chain.